We begin with the raw amino-acid sequence, 1068 residues long: Putative protein TIC 214 N-terminal part (1068 aa).

6 consecutive transmembrane segments (helical) span residues 11–31 (VLWVPILSWINFSSTFFLFGI), 68–88 (ITGQLLIFLSIFYSPLYVLLI), 92–112 (LLTLLVLPYILFYWYKIKDLI), 131–151 (IFFDSFIFQLFNPVVLPSPVL), 166–186 (FIFLLSSFLGWCFGQFLFVSL), and 213–233 (FSIIILSFSLLHLSRAPVPFI).

This sequence belongs to the TIC214 family. Part of the Tic complex.

It is found in the plastid. Its subcellular location is the chloroplast inner membrane. In terms of biological role, involved in protein precursor import into chloroplasts. May be part of an intermediate translocation complex acting as a protein-conducting channel at the inner envelope. This Marchantia polymorpha (Common liverwort) protein is Putative protein TIC 214 N-terminal part.